We begin with the raw amino-acid sequence, 271 residues long: Putative phosphoenolpyruvate synthase regulatory protein (271 aa).

151-158 (GVSRSGKT) lines the ADP pocket.

The protein belongs to the pyruvate, phosphate/water dikinase regulatory protein family. PSRP subfamily.

It catalyses the reaction [pyruvate, water dikinase] + ADP = [pyruvate, water dikinase]-phosphate + AMP + H(+). It carries out the reaction [pyruvate, water dikinase]-phosphate + phosphate + H(+) = [pyruvate, water dikinase] + diphosphate. In terms of biological role, bifunctional serine/threonine kinase and phosphorylase involved in the regulation of the phosphoenolpyruvate synthase (PEPS) by catalyzing its phosphorylation/dephosphorylation. This Paraburkholderia xenovorans (strain LB400) protein is Putative phosphoenolpyruvate synthase regulatory protein.